We begin with the raw amino-acid sequence, 210 residues long: Glutathione S-transferase-like protein FUS3 (210 aa).

The region spanning Met-1–Ser-74 is the GST N-terminal domain. Residues Asp-80 to Arg-206 form the GST C-terminal domain.

The protein belongs to the GST superfamily.

Glutathione S-transferase-like protein; part of the gene cluster that mediates the biosynthesis of the mycotoxin fusarin C. Within the cluster, FUS1, FUS2, FUS8 and FUS9 are sufficient for fusarin production. The other FUS cluster members are not essential for fusarin C biosynthesis. This is Glutathione S-transferase-like protein FUS3 from Gibberella fujikuroi (strain CBS 195.34 / IMI 58289 / NRRL A-6831) (Bakanae and foot rot disease fungus).